Reading from the N-terminus, the 342-residue chain is Signal-regulatory protein beta-2 (342 aa).

The first 32 residues, 1–32, serve as a signal peptide directing secretion; sequence MCSTMSAPTCLAHLPPCFLLLALVLVPSDASG. 2 consecutive Ig-like V-type domains span residues 33–143 and 157–258; these read QSSR…KSDE and PDLW…SGQG. Residues 33 to 287 are Extracellular-facing; the sequence is QSSRNDWQVL…EPATEMSPTG (255 aa). A disulfide bridge links C60 with C127. Residues N116, N179, and N231 are each glycosylated (N-linked (GlcNAc...) asparagine). C180 and C242 are oxidised to a cystine. Residues 288 to 308 traverse the membrane as a helical segment; sequence LLVVFAPVVLGLKAITLAALL. Residues 309-342 lie on the Cytoplasmic side of the membrane; the sequence is LALATSRRSPGQEDVKTTGPAGAMNTLAWSKGQE. The disordered stretch occupies residues 317–342; the sequence is SPGQEDVKTTGPAGAMNTLAWSKGQE.

It localises to the membrane. The chain is Signal-regulatory protein beta-2 (SIRPB2) from Homo sapiens (Human).